The chain runs to 196 residues: Peroxynitrite isomerase (196 aa).

The short motif at 46–52 (GVWRGRG) is the GXWXGXG element. His186 provides a ligand contact to heme b.

The protein belongs to the nitrobindin family. In terms of assembly, homodimer. Requires heme b as cofactor.

It catalyses the reaction peroxynitrite = nitrate. The protein operates within nitrogen metabolism. Its function is as follows. Heme-binding protein able to scavenge peroxynitrite and to protect free L-tyrosine against peroxynitrite-mediated nitration, by acting as a peroxynitrite isomerase that converts peroxynitrite to nitrate. Therefore, this protein likely plays a role in peroxynitrite sensing and in the detoxification of reactive nitrogen and oxygen species (RNS and ROS, respectively). Is able to bind nitric oxide (NO) in vitro, but may act as a sensor of peroxynitrite levels in vivo. The sequence is that of Peroxynitrite isomerase from Salinispora tropica (strain ATCC BAA-916 / DSM 44818 / JCM 13857 / NBRC 105044 / CNB-440).